Here is an 86-residue protein sequence, read N- to C-terminus: Large ribosomal subunit protein bL31 (86 aa).

Residues Y65–K86 form a disordered region. The segment covering T74–K86 has biased composition (basic and acidic residues).

Belongs to the bacterial ribosomal protein bL31 family. Type A subfamily. In terms of assembly, part of the 50S ribosomal subunit.

Binds the 23S rRNA. This chain is Large ribosomal subunit protein bL31, found in Prochlorococcus marinus subsp. pastoris (strain CCMP1986 / NIES-2087 / MED4).